The following is a 474-amino-acid chain: MTTVPKNAVAKTLYQKVWDAHVVATPEGEAPIIYVDRHLVHEVTSPQAFSGLKVAGRKLRAPEKTFATMDHNTSTRSASLDALSPMARTQVETLAQNCKDFGVRLYDIHHPNQGIVHVMGPELGITLPGTVIVCGDSHTATHGAFGALAFGIGTSEVEHVLATQTLRQLKAKTMKIEVRGHVSDGVTAKDIVLAIIGKIGMDGGTGYVVEFCGEAIEALSMEGRMTVCNMAIEMGAKAGMVAPDQTTFDYLAGREFAPKGEDWAEAVAYWQAIKTDDGAVFDAVVELDAADIAPQLTWGTNPGQVVAIDGKVPNPLDEANPSTRASMEKALEYIGLSAGTPMTDISINKVFIGSCTNSRIEDLRSAAVHAKGRKVASGVTAIVVPGSGQVKAQAEAEGLDKIFIEAGFEWRLPGCSMCLAMNDDRLEAGDRCASTSNRNFEGRQGRGSRTHLVSPAMAAAAAVAGHFVDIRKPY.

[4Fe-4S] cluster is bound by residues cysteine 355, cysteine 415, and cysteine 418.

This sequence belongs to the aconitase/IPM isomerase family. LeuC type 1 subfamily. In terms of assembly, heterodimer of LeuC and LeuD. It depends on [4Fe-4S] cluster as a cofactor.

The enzyme catalyses (2R,3S)-3-isopropylmalate = (2S)-2-isopropylmalate. The protein operates within amino-acid biosynthesis; L-leucine biosynthesis; L-leucine from 3-methyl-2-oxobutanoate: step 2/4. Functionally, catalyzes the isomerization between 2-isopropylmalate and 3-isopropylmalate, via the formation of 2-isopropylmaleate. This Shewanella sp. (strain W3-18-1) protein is 3-isopropylmalate dehydratase large subunit.